Here is a 595-residue protein sequence, read N- to C-terminus: MFS-type transporter phomT (595 aa).

The segment covering 1 to 11 (MESDGKSDRTK) has biased composition (basic and acidic residues). The interval 1–62 (MESDGKSDRT…HVSADDGPVD (62 aa)) is disordered. Residues 30–48 (PGHSTDTEGNGSDNNNTQV) show a composition bias toward polar residues. N-linked (GlcNAc...) asparagine glycosylation is found at Asn-39 and Asn-44. A run of 3 helical transmembrane segments spans residues 91–111 (IILLALELAVLCVALDNTIVA), 126–146 (DVGWYGSAYLLTLCAFQLFFG), and 156–176 (WVFLSCLFIFEIGSLICGVAP). Asn-177 is a glycosylation site (N-linked (GlcNAc...) asparagine). 3 consecutive transmembrane segments (helical) span residues 186–206 (AVAGLGAAGIFSGALIIIAFS), 217–237 (ALISAIFGISSVIGPLLGGVF), and 245–265 (WCFYINLPIGGVTAVALVFFL). The N-linked (GlcNAc...) asparagine glycan is linked to Asn-277. Helical transmembrane passes span 290 to 310 (IGTAIFLPCIVCILLALQWGG), 320 to 340 (VVALLVLFGVLLITFVGLQFW), 362 to 382 (VFTGLVGASFFIMVYYLPIWF), 409 to 429 (IVGGVFVSFTGYYTPMMYALP), 451 to 471 (WIGYQILFGLGLGLGMQQGIV), 483 to 503 (AIGTSLQVFAQMFGGSLFVSV), and 559 to 579 (VIWTFRTALITTCLSVLAVIF).

The protein belongs to the major facilitator superfamily. TCR/Tet family.

The protein localises to the cell membrane. Its function is as follows. MFS-type transporter; part of the gene cluster that mediates the biosynthesis of the phomopsins, a group of hexapeptide mycotoxins which infects lupins and causes lupinosis disease in livestock. PhomT is likely to be involved in the cellular export of phomopsins. The protein is MFS-type transporter phomT of Diaporthe leptostromiformis (Lupinosis disease fungus).